The primary structure comprises 391 residues: Tryptophan synthase beta chain 2 (391 aa).

An N6-(pyridoxal phosphate)lysine modification is found at Lys83.

This sequence belongs to the TrpB family. In terms of assembly, tetramer of two alpha and two beta chains. Pyridoxal 5'-phosphate is required as a cofactor.

It carries out the reaction (1S,2R)-1-C-(indol-3-yl)glycerol 3-phosphate + L-serine = D-glyceraldehyde 3-phosphate + L-tryptophan + H2O. It functions in the pathway amino-acid biosynthesis; L-tryptophan biosynthesis; L-tryptophan from chorismate: step 5/5. The beta subunit is responsible for the synthesis of L-tryptophan from indole and L-serine. The chain is Tryptophan synthase beta chain 2 (trpB2) from Chlamydia caviae (strain ATCC VR-813 / DSM 19441 / 03DC25 / GPIC) (Chlamydophila caviae).